The chain runs to 378 residues: Chaperone protein DnaJ (378 aa).

The region spanning 5-70 (DYYEVLGVAK…QKRAAYDQYG (66 aa)) is the J domain. The segment at 138–216 (GYDTQIRVPS…CHGSGKVKET (79 aa)) adopts a CR-type zinc-finger fold. Residues Cys151, Cys154, Cys168, Cys171, Cys190, Cys193, Cys204, and Cys207 each coordinate Zn(2+). CXXCXGXG motif repeat units follow at residues 151–158 (CEVCHGSG), 168–175 (CPTCHGQG), 190–197 (CPKCHGTG), and 204–211 (CVHCHGSG).

The protein belongs to the DnaJ family. As to quaternary structure, homodimer. Zn(2+) serves as cofactor.

Its subcellular location is the cytoplasm. In terms of biological role, participates actively in the response to hyperosmotic and heat shock by preventing the aggregation of stress-denatured proteins and by disaggregating proteins, also in an autonomous, DnaK-independent fashion. Unfolded proteins bind initially to DnaJ; upon interaction with the DnaJ-bound protein, DnaK hydrolyzes its bound ATP, resulting in the formation of a stable complex. GrpE releases ADP from DnaK; ATP binding to DnaK triggers the release of the substrate protein, thus completing the reaction cycle. Several rounds of ATP-dependent interactions between DnaJ, DnaK and GrpE are required for fully efficient folding. Also involved, together with DnaK and GrpE, in the DNA replication of plasmids through activation of initiation proteins. The protein is Chaperone protein DnaJ of Burkholderia lata (strain ATCC 17760 / DSM 23089 / LMG 22485 / NCIMB 9086 / R18194 / 383).